The sequence spans 310 residues: Deoxypodophyllotoxin synthase (310 aa).

The region spanning 159–258 (STNYLLHFMR…RLSTSSFSFP (100 aa)) is the Fe2OG dioxygenase domain. Positions 184, 186, and 239 each coordinate Fe cation. Position 249 (arginine 249) interacts with 2-oxoglutarate.

This sequence belongs to the iron/ascorbate-dependent oxidoreductase family. The cofactor is Fe(2+). Mostly expressed in leaves and stems.

The catalysed reaction is (-)-yatein + 2-oxoglutarate + O2 = (-)-deoxypodophyllotoxin + succinate + CO2 + H2O. Its pathway is aromatic compound metabolism; phenylpropanoid biosynthesis. Its function is as follows. 2-oxoglutarate-dependent dioxygenase involved in the biosynthesis of etoposide, a chemotherapeutic compound of the topoisomerase inhibitor family. Catalyzes the conversion of yatein to deoxypodophyllotoxin. Can also use, to some extent, demethylyatein as substrate. This is Deoxypodophyllotoxin synthase from Sinopodophyllum hexandrum (Himalayan may apple).